A 587-amino-acid polypeptide reads, in one-letter code: Kelch-like protein 3 (587 aa).

Serine 10 carries the phosphoserine modification. The 68-residue stretch at 50–117 (CDVMIVAEDV…IYTAEIEVTE (68 aa)) folds into the BTB domain. One can recognise a BACK domain in the interval 152–254 (CLGIRAFADV…PRDYLVQTVE (103 aa)). Threonine 295 bears the Phosphothreonine mark. Kelch repeat units lie at residues 302–347 (VMIV…FMAG), 348–394 (HVYA…VLND), 396–441 (LYAV…VVEG), 442–490 (KLYA…VLSG), 491–537 (QLYA…AVNG), and 539–585 (LYVV…VIHK). The residue at position 375 (threonine 375) is a Phosphothreonine. Phosphoserine is present on serine 376. Phosphoserine; by PKA and PKC is present on serine 433.

This sequence belongs to the KLHL3 family. As to quaternary structure, homodimer. Component of the BCR(KLHL3) E3 ubiquitin ligase complex, at least composed of CUL3 and KLHL3 and RBX1. Interacts with CLDN8. Post-translationally, phosphorylation at Ser-433 by PKA or PKC decreases the interaction with WNK1 and WNK4, leading to inhibit their degradation by the BCR(KLHL3) complex. Phosphorylated at Ser-433 by PKC in response to angiotensin II signaling, decreasing ability to promote degradation of WNK1 and WNK4, leading to activation of Na-Cl cotransporter SLC12A3/NCC. Phosphorylation at Ser-433 is increased by insulin. Dephosphorylated at Ser-433 by calcineurin PPP3CA, promoting degradation of WNK1 and WNK4. In terms of tissue distribution, widely expressed.

It localises to the cytoplasm. It is found in the cytosol. Its subcellular location is the cytoskeleton. The protein operates within protein modification; protein ubiquitination. In terms of biological role, substrate-specific adapter of a BCR (BTB-CUL3-RBX1) E3 ubiquitin ligase complex that acts as a regulator of ion transport in the distal nephron. The BCR(KLHL3) complex acts by mediating ubiquitination and degradation of WNK1 and WNK4, two activators of Na-Cl cotransporter SLC12A3/NCC in distal convoluted tubule cells of kidney, thereby regulating NaCl reabsorption. The BCR(KLHL3) complex also mediates ubiquitination and degradation of WNK3. The BCR(KLHL3) complex also mediates ubiquitination of CLDN8, a tight-junction protein required for paracellular chloride transport in the kidney, leading to its degradation. The polypeptide is Kelch-like protein 3 (Homo sapiens (Human)).